Here is a 536-residue protein sequence, read N- to C-terminus: Protoporphyrinogen oxidase, chloroplastic (536 aa).

Residues 1–36 constitute a chloroplast transit peptide; the sequence is MAAAAAAMATATSATAAPPLRIRDAARRTRRRGHVR. Residues 62–67, 87–88, and 111–114 each bind FAD; these read GGGISG, EA, and GPNS. The tract at residues 248-272 is disordered; that stretch reads TIKTIQERGKNPKPPRDPRLPTPKG. Basic and acidic residues predominate over residues 252–266; that stretch reads IQERGKNPKPPRDPR. Residue 510–512 participates in FAD binding; that stretch reads VAL.

The protein belongs to the protoporphyrinogen/coproporphyrinogen oxidase family. Protoporphyrinogen oxidase subfamily. FAD serves as cofactor.

Its subcellular location is the plastid. It is found in the chloroplast. The enzyme catalyses protoporphyrinogen IX + 3 O2 = protoporphyrin IX + 3 H2O2. It participates in porphyrin-containing compound metabolism; protoporphyrin-IX biosynthesis; protoporphyrin-IX from protoporphyrinogen-IX: step 1/1. The protein operates within porphyrin-containing compound metabolism; chlorophyll biosynthesis. Functionally, catalyzes the 6-electron oxidation of protoporphyrinogen-IX to form protoporphyrin-IX. The protein is Protoporphyrinogen oxidase, chloroplastic (PPOX1) of Oryza sativa subsp. japonica (Rice).